A 741-amino-acid chain; its full sequence is Transketolase, chloroplastic (741 aa).

The N-terminal 67 residues, 1–67, are a transit peptide targeting the chloroplast; that stretch reads MASSSSLTLS…TKQQFSVRAS (67 aa). Position 103 (His103) interacts with substrate. Residues His143 and 192-194 contribute to the thiamine diphosphate site; that span reads GPL. Asp233 is a Mg(2+) binding site. Gly234 and Asn263 together coordinate thiamine diphosphate. The Mg(2+) site is built by Asn263 and Ile265. Positions 340, 434, and 461 each coordinate substrate. Position 340 (His340) interacts with thiamine diphosphate. 2 residues coordinate thiamine diphosphate: Glu488 and Phe515. Glu488 acts as the Proton donor in catalysis. Substrate is bound by residues His539, Asp547, and Arg598.

It belongs to the transketolase family. In terms of assembly, homodimer. It depends on Mg(2+) as a cofactor. Ca(2+) serves as cofactor. Mn(2+) is required as a cofactor. Requires Co(2+) as cofactor. The cofactor is thiamine diphosphate.

The protein resides in the plastid. It is found in the chloroplast thylakoid membrane. The catalysed reaction is D-sedoheptulose 7-phosphate + D-glyceraldehyde 3-phosphate = aldehydo-D-ribose 5-phosphate + D-xylulose 5-phosphate. It functions in the pathway carbohydrate biosynthesis; Calvin cycle. Functionally, catalyzes the reversible transfer of a two-carbon ketol group from fructose-6-phosphate or sedoheptulose-7-phosphate to glyceraldehyde-3-phosphate to yield xylulose-5-phosphate and erythrose-4-phosphate or ribose-5-phosphate, respectively. The polypeptide is Transketolase, chloroplastic (Solanum tuberosum (Potato)).